The primary structure comprises 219 residues: Adenylate kinase (219 aa).

10–15 (GAGKGT) serves as a coordination point for ATP. Residues 30-59 (STGDMLRAAVKAGTPLGQQAKKVMDAGELV) are NMP. Residues Thr-31, Arg-36, 57–59 (ELV), 85–88 (GFPR), and Gln-92 each bind AMP. An LID region spans residues 122–159 (GRRVHPGSGRVYHVEHNPPKEEGKDDVTGEPLVQRDDD). Residues Arg-123 and 132–133 (VY) contribute to the ATP site. The segment at 129–152 (SGRVYHVEHNPPKEEGKDDVTGEP) is disordered. Residues 133-152 (YHVEHNPPKEEGKDDVTGEP) show a composition bias toward basic and acidic residues. AMP-binding residues include Arg-156 and Arg-167. ATP is bound at residue Gly-203.

Belongs to the adenylate kinase family. In terms of assembly, monomer.

Its subcellular location is the cytoplasm. The enzyme catalyses AMP + ATP = 2 ADP. The protein operates within purine metabolism; AMP biosynthesis via salvage pathway; AMP from ADP: step 1/1. Its function is as follows. Catalyzes the reversible transfer of the terminal phosphate group between ATP and AMP. Plays an important role in cellular energy homeostasis and in adenine nucleotide metabolism. This chain is Adenylate kinase, found in Alkalilimnicola ehrlichii (strain ATCC BAA-1101 / DSM 17681 / MLHE-1).